Here is a 255-residue protein sequence, read N- to C-terminus: Malonyl-[acyl-carrier protein] O-methyltransferase (255 aa).

It belongs to the methyltransferase superfamily.

It carries out the reaction malonyl-[ACP] + S-adenosyl-L-methionine = malonyl-[ACP] methyl ester + S-adenosyl-L-homocysteine. It participates in cofactor biosynthesis; biotin biosynthesis. Converts the free carboxyl group of a malonyl-thioester to its methyl ester by transfer of a methyl group from S-adenosyl-L-methionine (SAM). It allows to synthesize pimeloyl-ACP via the fatty acid synthetic pathway. The polypeptide is Malonyl-[acyl-carrier protein] O-methyltransferase (Porphyromonas gingivalis (strain ATCC BAA-308 / W83)).